The sequence spans 148 residues: Lipoprotein signal peptidase (148 aa).

Transmembrane regions (helical) follow at residues 57–77 (VLLV…FIKY) and 88–105 (VSFI…RIFY). Residues aspartate 110 and aspartate 129 contribute to the active site. A helical membrane pass occupies residues 124 to 144 (TFNIADILVVVGTIMLAIFLL).

This sequence belongs to the peptidase A8 family.

It is found in the cell membrane. The catalysed reaction is Release of signal peptides from bacterial membrane prolipoproteins. Hydrolyzes -Xaa-Yaa-Zaa-|-(S,diacylglyceryl)Cys-, in which Xaa is hydrophobic (preferably Leu), and Yaa (Ala or Ser) and Zaa (Gly or Ala) have small, neutral side chains.. Its pathway is protein modification; lipoprotein biosynthesis (signal peptide cleavage). Functionally, this protein specifically catalyzes the removal of signal peptides from prolipoproteins. The chain is Lipoprotein signal peptidase from Clostridium novyi (strain NT).